The primary structure comprises 493 residues: Cobyric acid synthase (493 aa).

A GATase cobBQ-type domain is found at 255–441 (ELEIAVLRLP…LHGLLENGRW (187 aa)). C336 functions as the Nucleophile in the catalytic mechanism. H433 is a catalytic residue.

Belongs to the CobB/CobQ family. CobQ subfamily.

It participates in cofactor biosynthesis; adenosylcobalamin biosynthesis. Functionally, catalyzes amidations at positions B, D, E, and G on adenosylcobyrinic A,C-diamide. NH(2) groups are provided by glutamine, and one molecule of ATP is hydrogenolyzed for each amidation. The polypeptide is Cobyric acid synthase (Synechococcus sp. (strain RCC307)).